The sequence spans 339 residues: Transaldolase (339 aa).

K135 (schiff-base intermediate with substrate) is an active-site residue.

This sequence belongs to the transaldolase family. Type 1 subfamily. In terms of assembly, homodimer.

It is found in the cytoplasm. It carries out the reaction D-sedoheptulose 7-phosphate + D-glyceraldehyde 3-phosphate = D-erythrose 4-phosphate + beta-D-fructose 6-phosphate. The protein operates within carbohydrate degradation; pentose phosphate pathway; D-glyceraldehyde 3-phosphate and beta-D-fructose 6-phosphate from D-ribose 5-phosphate and D-xylulose 5-phosphate (non-oxidative stage): step 2/3. Its function is as follows. Transaldolase is important for the balance of metabolites in the pentose-phosphate pathway. The sequence is that of Transaldolase from Prochlorococcus marinus (strain MIT 9211).